Consider the following 353-residue polypeptide: Lactosylceramide 4-alpha-galactosyltransferase (353 aa).

Residues 1–22 (MSKPPDLLLRLLRGAPRQRVCT) are Cytoplasmic-facing. A helical; Signal-anchor for type II membrane protein membrane pass occupies residues 23–43 (LFIIGFKFTFFVSIMIYWHVV). The Lumenal portion of the chain corresponds to 44 to 353 (GEPKEKGQLY…TTHEAMKMYL (310 aa)). An N-linked (GlcNAc...) asparagine glycan is attached at N121. Positions 192 to 194 (DTD) match the DXD motif motif. N203 is a glycosylation site (N-linked (GlcNAc...) asparagine).

Belongs to the glycosyltransferase 32 family. In terms of tissue distribution, ubiquitous. Highly expressed in kidney, heart, spleen, liver, testis and placenta.

It is found in the golgi apparatus membrane. It carries out the reaction a beta-D-Gal-(1-&gt;4)-beta-D-Glc-(1&lt;-&gt;1)-Cer(d18:1(4E)) + UDP-alpha-D-galactose = a globoside Gb3Cer (d18:1(4E)) + UDP + H(+). It catalyses the reaction a beta-D-Gal-(1&lt;-&gt;1')-ceramide + UDP-alpha-D-galactose = alpha-D-Gal-(1-&gt;4)-beta-D-Gal-(1&lt;-&gt;1')-Cer + UDP + H(+). It functions in the pathway glycolipid biosynthesis. In terms of biological role, catalyzes the transfer of galactose from UDP-alpha-D-galactose to lactosylceramide/beta-D-galactosyl-(1-&gt;4)-beta-D-glucosyl-(1&lt;-&gt;1)-ceramide(d18:1(4E)) to produce globotriaosylceramide/globoside Gb3Cer (d18:1(4E)). Also able to transfer galactose to galactosylceramide/beta-D-Gal-(1&lt;-&gt;1')-Cer. Globoside Gb3Cer is a glycosphingolipid of the globo serie, one of the major types of neutral root structures of glycosphingolipids, that constitute a significant portion of mammalian cell membranes. Globotriaosylceramide/globoside Gb3Cer in blood and tissue cell membranes is the antigen Pk of blood histogroup P. Its function is as follows. (Microbial infection) Globotriaosylceramide is one of the cellular ligands for bacterial verotoxins. The protein is Lactosylceramide 4-alpha-galactosyltransferase (A4GALT) of Homo sapiens (Human).